The primary structure comprises 348 residues: Ion-translocating oxidoreductase complex subunit D (348 aa).

The next 5 helical transmembrane spans lie at 15–35 (LTAK…GMQA), 36–56 (YFFG…AVAI), 67–87 (LTAF…LAMS), 88–108 (IPPY…LLLA), and 125–145 (VAYA…LVPI). Thr186 bears the FMN phosphoryl threonine mark. Transmembrane regions (helical) follow at residues 212 to 232 (LFAN…LLLI), 241 to 261 (IPAA…LLLP), 265 to 285 (LNVV…FIAT), 298 to 318 (LIFG…GNYP), and 320 to 340 (AVAF…HYTQ).

The protein belongs to the NqrB/RnfD family. The complex is composed of six subunits: RnfA, RnfB, RnfC, RnfD, RnfE and RnfG. FMN serves as cofactor.

The protein localises to the cell inner membrane. Part of a membrane-bound complex that couples electron transfer with translocation of ions across the membrane. This chain is Ion-translocating oxidoreductase complex subunit D, found in Actinobacillus pleuropneumoniae serotype 7 (strain AP76).